Consider the following 94-residue polypeptide: Progonadoliberin-1 (94 aa).

The signal sequence occupies residues 1 to 22; sequence MAAKILALWLLLAGTVFPQGCC. Pyrrolidone carboxylic acid is present on Q23. Residue G32 is modified to Glycine amide.

Belongs to the GnRH family. Synthesized in preoptic neurons and is transported to the pituitary in the preoptic-hypophyseal axons.

The protein resides in the secreted. In terms of biological role, stimulates the secretion of gonadotropins. May be responsible for the regulation of the hypothalamic-pituitary-gonadal axis. The polypeptide is Progonadoliberin-1 (gnrh1) (Haplochromis burtoni (Burton's mouthbrooder)).